Consider the following 254-residue polypeptide: 5'-nucleotidase SurE (254 aa).

Residues Asp-8, Asp-9, Ser-40, and Asn-93 each contribute to the a divalent metal cation site.

This sequence belongs to the SurE nucleotidase family. A divalent metal cation serves as cofactor.

Its subcellular location is the cytoplasm. The enzyme catalyses a ribonucleoside 5'-phosphate + H2O = a ribonucleoside + phosphate. Functionally, nucleotidase that shows phosphatase activity on nucleoside 5'-monophosphates. The protein is 5'-nucleotidase SurE of Methylorubrum extorquens (strain CM4 / NCIMB 13688) (Methylobacterium extorquens).